Reading from the N-terminus, the 444-residue chain is ATP-dependent protease ATPase subunit HslU (444 aa).

ATP-binding positions include Ile18, Gly60–Glu65, Asp256, Glu322, and Arg394.

Belongs to the ClpX chaperone family. HslU subfamily. As to quaternary structure, a double ring-shaped homohexamer of HslV is capped on each side by a ring-shaped HslU homohexamer. The assembly of the HslU/HslV complex is dependent on binding of ATP.

It localises to the cytoplasm. In terms of biological role, ATPase subunit of a proteasome-like degradation complex; this subunit has chaperone activity. The binding of ATP and its subsequent hydrolysis by HslU are essential for unfolding of protein substrates subsequently hydrolyzed by HslV. HslU recognizes the N-terminal part of its protein substrates and unfolds these before they are guided to HslV for hydrolysis. This Serratia proteamaculans (strain 568) protein is ATP-dependent protease ATPase subunit HslU.